Here is a 403-residue protein sequence, read N- to C-terminus: S-adenosylmethionine synthase (403 aa).

Residue H17 coordinates ATP. A Mg(2+)-binding site is contributed by D19. A K(+)-binding site is contributed by E45. L-methionine contacts are provided by E58 and Q104. The interval 104–114 (QSPDIAQGVDT) is flexible loop. ATP contacts are provided by residues 179-181 (DGK), 250-251 (KF), D259, 265-266 (RK), A282, and K286. Position 259 (D259) interacts with L-methionine. K290 lines the L-methionine pocket.

This sequence belongs to the AdoMet synthase family. As to quaternary structure, homotetramer; dimer of dimers. Mg(2+) is required as a cofactor. Requires K(+) as cofactor.

It localises to the cytoplasm. It carries out the reaction L-methionine + ATP + H2O = S-adenosyl-L-methionine + phosphate + diphosphate. It participates in amino-acid biosynthesis; S-adenosyl-L-methionine biosynthesis; S-adenosyl-L-methionine from L-methionine: step 1/1. In terms of biological role, catalyzes the formation of S-adenosylmethionine (AdoMet) from methionine and ATP. The overall synthetic reaction is composed of two sequential steps, AdoMet formation and the subsequent tripolyphosphate hydrolysis which occurs prior to release of AdoMet from the enzyme. The sequence is that of S-adenosylmethionine synthase from Mycolicibacterium paratuberculosis (strain ATCC BAA-968 / K-10) (Mycobacterium paratuberculosis).